Reading from the N-terminus, the 56-residue chain is Attractin (56 aa).

3 cysteine pairs are disulfide-bonded: Cys4/Cys41, Cys13/Cys33, and Cys20/Cys26. N-linked (GlcNAc...) asparagine glycosylation occurs at Asn25.

As to expression, produced by the albumen gland of the egg cordons.

The protein resides in the secreted. Water-borne pheromone that attract the marine mollusk Aplysia into breeding aggregations and coordinate male and female reproductive behavior within the aggregation. The sequence is that of Attractin (ATT) from Aplysia depilans (Sea hare).